Consider the following 592-residue polypeptide: Sodium- and chloride-dependent transporter XTRP3A (592 aa).

Over 1 to 7 (MEKARPQ) the chain is Cytoplasmic. Residues 8–28 (WGHPLQFVFACISYAVGLGNV) form a helical membrane-spanning segment. Topologically, residues 29–42 (WRFPYLCQMYGGGS) are extracellular. Residues 43–63 (FLVPYIIMLIVEGMPLLYLEL) form a helical membrane-spanning segment. Residues 64-79 (AVGQRMRQGSIGAWRT) are Cytoplasmic-facing. A helical membrane pass occupies residues 80–100 (ISPYLSGVGVASVVVSFFLSM). At 101–165 (YYNVINAWGF…ISPSIQENGG (65 aa)) the chain is on the extracellular side. A glycan (N-linked (GlcNAc...) asparagine) is linked at asparagine 131. A helical membrane pass occupies residues 166 to 186 (VQWEPALCLTLAWLMVYLCIL). At 187-194 (RGTESTGK) the chain is on the cytoplasmic side. A helical transmembrane segment spans residues 195-215 (VVYFTASMPYCVLIIYLVRGL). Residues 216 to 241 (TLHGATNGLMYMFTPKMEQLANPKAW) lie on the Extracellular side of the membrane. The helical transmembrane segment at 242 to 262 (INAATQIFFSLGLGFGSLIAF) threads the bilayer. The Cytoplasmic segment spans residues 263 to 276 (ASYNEPSNNCQKHA). The chain crosses the membrane as a helical span at residues 277-297 (IIVSIINSSTSIFASIVTFSI). The Extracellular portion of the chain corresponds to 298-389 (YGFKATFNYE…EAIKNMEVSQ (92 aa)). The helical transmembrane segment at 390–410 (LWSVLYFFMLLMLGIGSMLGN) threads the bilayer. Residues 411–431 (TAAILTPLTDSKVISSYLPKE) are Cytoplasmic-facing. Residues 432-452 (AISGLVCLINCAVGMVFTMEA) traverse the membrane as a helical segment. The Extracellular portion of the chain corresponds to 453-465 (GNYWFDIFNDYAA). The helical transmembrane segment at 466–486 (TLSLLLIVLVETIAVCYVYGL) threads the bilayer. The Cytoplasmic portion of the chain corresponds to 487-504 (KRFESDLRAMTGRTLSWY). The chain crosses the membrane as a helical span at residues 505–525 (WKVMWAFVSPLLIVGLFIFYL). The Extracellular portion of the chain corresponds to 526–554 (SDYILTGTLQYQAWDATQGQLVTKDYPPH). Residues 555 to 575 (ALAVIGLLVASSTMCIPLVAL) form a helical membrane-spanning segment. Topologically, residues 576-592 (GTFIRNRLKRGGSAPVA) are cytoplasmic.

The protein belongs to the sodium:neurotransmitter symporter (SNF) (TC 2.A.22) family. SLC6A20 subfamily. Expressed in brain, kidney, small intestine, thymus, spleen and lung. In the brain, expressed in cerebellum, cortex and brain stem. Not detected in liver, muscle or heart. In brain, widespread in various regions, including the meninges, choroid plexus, cortex, hippocampus and thalamus.

The protein resides in the apical cell membrane. It carries out the reaction L-proline(out) + chloride(out) + 2 Na(+)(out) = L-proline(in) + chloride(in) + 2 Na(+)(in). It catalyses the reaction 4-hydroxy-L-proline(out) + chloride(out) + 2 Na(+)(out) = 4-hydroxy-L-proline(in) + chloride(in) + 2 Na(+)(in). The catalysed reaction is 2-methyl-2-(methylamino)propanoate(out) + chloride(out) + 2 Na(+)(out) = 2-methyl-2-(methylamino)propanoate(in) + chloride(in) + 2 Na(+)(in). The enzyme catalyses L-pipecolate(out) + chloride(out) + 2 Na(+)(out) = L-pipecolate(in) + chloride(in) + 2 Na(+)(in). It carries out the reaction glycine betaine(out) + chloride(out) + 2 Na(+)(out) = glycine betaine(in) + chloride(in) + 2 Na(+)(in). It catalyses the reaction glycine(out) + chloride(out) + 2 Na(+)(out) = glycine(in) + chloride(in) + 2 Na(+)(in). In terms of biological role, mediates the Na(+)- and Cl(-)-dependent uptake of imino acids such as L-proline, N-methyl-L-proline and pipecolate as well as N-methylated amino acids. Also transports glycine, regulates proline and glycine homeostasis in the brain playing a role in the modulation of NMDAR currents. The chain is Sodium- and chloride-dependent transporter XTRP3A from Mus musculus (Mouse).